A 237-amino-acid chain; its full sequence is uncharacterized protein (237 aa).

Position 50-57 (50-57 (APPGTGKS)) interacts with ATP.

This is an uncharacterized protein from Escherichia coli (strain K12).